The following is a 66-amino-acid chain: Beta-mammal toxin Co1 (66 aa).

Residues 1 to 66 enclose the LCN-type CS-alpha/beta domain; it reads KEGYLVNHST…VWPLPKKTCN (66 aa). 4 cysteine pairs are disulfide-bonded: Cys-12/Cys-65, Cys-16/Cys-41, Cys-25/Cys-46, and Cys-29/Cys-48.

As to expression, expressed by the venom gland.

The protein localises to the secreted. Functionally, beta toxins bind voltage-independently at site-4 of sodium channels (Nav) and shift the voltage of activation toward more negative potentials thereby affecting sodium channel activation and promoting spontaneous and repetitive firing. This toxin acts on human Nav1.6/SCN8A voltage-gated sodium channels. In vivo, is lethal to mice 40 minutes after intraperitoneal injection at a dose of 5ug. No activity is observed when injected into crickets or woodlice. The chain is Beta-mammal toxin Co1 from Centruroides ornatus (Scorpion).